The sequence spans 61 residues: Alpha-conotoxin-like Lp1.6a (61 aa).

Positions 1-21 (MGMRMMFIIFLFVVLATTVVS) are cleaved as a signal peptide. The propeptide occupies 22-44 (FTSGRASDGRNAPANNKVSDLIR). Residue glutamine 45 is modified to Pyrrolidone carboxylic acid. 2 cysteine pairs are disulfide-bonded: cysteine 47–cysteine 53 and cysteine 48–cysteine 60. Cysteine 60 carries the post-translational modification Cysteine amide.

The protein belongs to the conotoxin A superfamily. Expressed by the venom duct.

It localises to the secreted. Functionally, alpha-conotoxins act on postsynaptic membranes, they bind to the nicotinic acetylcholine receptors (nAChR) and thus inhibit them. This is Alpha-conotoxin-like Lp1.6a from Conus leopardus (Leopard cone).